Reading from the N-terminus, the 223-residue chain is B-cell antigen receptor complex-associated protein alpha chain (223 aa).

An N-terminal signal peptide occupies residues 1 to 31 (MPEGPQALQSPPATIFLLLISAAGLGPGCQA). Residues 32–120 (LWVEWGPPSV…KIQRSCGTYL (89 aa)) enclose the Ig-like C2-type domain. Residues 32–140 (LWVEWGPPSV…LDMGEGTKNN (109 aa)) are Extracellular-facing. A disulfide bridge connects residues cysteine 53 and cysteine 104. Asparagine 56, asparagine 61, asparagine 71, and asparagine 95 each carry an N-linked (GlcNAc...) asparagine glycan. Residues 141-161 (IITAEGIILLICAVVPGTLLL) traverse the membrane as a helical segment. Topologically, residues 162-223 (FRKRWQNMKF…HIGDAQLEKP (62 aa)) are cytoplasmic. Residues 174 to 202 (DIQDDYEDENLYEGLNLDDCSMYEDISRG) enclose the ITAM domain. Tyrosine 185 is modified (phosphotyrosine; by SRC-type Tyr-kinases). Position 196 is a phosphotyrosine (tyrosine 196). The residue at position 201 (arginine 201) is an Asymmetric dimethylarginine; by PRMT1. Tyrosine 207 bears the Phosphotyrosine; by Tyr-kinases mark.

Heterodimer of alpha and beta chains; disulfide-linked. Part of the B-cell antigen receptor complex where the alpha/beta chain heterodimer is non-covalently associated with an antigen-specific membrane-bound surface immunoglobulin of two heavy chains and two light chains. Interacts through its phosphorylated ITAM domain with the SH2 domains of SYK which stimulates SYK autophosphorylation and activation. Also interacts, when phosphorylated on Tyr-207, with the SH2 domain of BLNK/SLP65, bringing BLNK into proximity with SYK and allowing SYK to phosphorylate BLNK which is necessary for trafficking of the BCR to late endosomes. Interacts with Src-family tyrosine kinases including FYN and LYN, increasing their activity. Phosphorylated on tyrosine, serine and threonine residues upon B-cell activation. Phosphorylation of tyrosine residues by Src-family kinases, including LYN, is an early and essential feature of the BCR signaling cascade. The phosphorylated tyrosines serve as docking sites for SH2-domain containing kinases, leading to their activation which in turn leads to phosphorylation of downstream targets. Phosphorylation of serine and threonine residues may prevent subsequent tyrosine phosphorylation. In terms of processing, arginine methylation in the ITAM domain may interfere with the binding of SYK. It promotes signals leading to B-cell differentiation. In terms of tissue distribution, B-cells.

Its subcellular location is the cell membrane. Its function is as follows. Required in cooperation with CD79B for initiation of the signal transduction cascade activated by binding of antigen to the B-cell antigen receptor complex (BCR) which leads to internalization of the complex, trafficking to late endosomes and antigen presentation. Also required for BCR surface expression and for efficient differentiation of pro- and pre-B-cells. Stimulates SYK autophosphorylation and activation. Binds to BLNK, bringing BLNK into proximity with SYK and allowing SYK to phosphorylate BLNK. Also interacts with and increases activity of some Src-family tyrosine kinases. Represses BCR signaling during development of immature B-cells. The polypeptide is B-cell antigen receptor complex-associated protein alpha chain (CD79A) (Bos taurus (Bovine)).